Reading from the N-terminus, the 242-residue chain is Enolase-phosphatase E1 (242 aa).

This sequence belongs to the HAD-like hydrolase superfamily. MasA/MtnC family. In terms of assembly, monomer. The cofactor is Mg(2+).

The catalysed reaction is 5-methylsulfanyl-2,3-dioxopentyl phosphate + H2O = 1,2-dihydroxy-5-(methylsulfanyl)pent-1-en-3-one + phosphate. Its pathway is amino-acid biosynthesis; L-methionine biosynthesis via salvage pathway; L-methionine from S-methyl-5-thio-alpha-D-ribose 1-phosphate: step 3/6. It participates in amino-acid biosynthesis; L-methionine biosynthesis via salvage pathway; L-methionine from S-methyl-5-thio-alpha-D-ribose 1-phosphate: step 4/6. Bifunctional enzyme that catalyzes the enolization of 2,3-diketo-5-methylthiopentyl-1-phosphate (DK-MTP-1-P) into the intermediate 2-hydroxy-3-keto-5-methylthiopentenyl-1-phosphate (HK-MTPenyl-1-P), which is then dephosphorylated to form the acireductone 1,2-dihydroxy-3-keto-5-methylthiopentene (DHK-MTPene). The protein is Enolase-phosphatase E1 of Synechococcus sp. (strain WH7803).